A 133-amino-acid polypeptide reads, in one-letter code: Holo-[acyl-carrier-protein] synthase (133 aa).

The Mg(2+) site is built by Asp-8 and Glu-56.

It belongs to the P-Pant transferase superfamily. AcpS family. Mg(2+) serves as cofactor.

The protein localises to the cytoplasm. It carries out the reaction apo-[ACP] + CoA = holo-[ACP] + adenosine 3',5'-bisphosphate + H(+). Its function is as follows. Transfers the 4'-phosphopantetheine moiety from coenzyme A to a Ser of acyl-carrier-protein. This is Holo-[acyl-carrier-protein] synthase from Clostridium perfringens (strain 13 / Type A).